Here is a 397-residue protein sequence, read N- to C-terminus: Acetylornithine aminotransferase (397 aa).

Residue F129 coordinates pyridoxal 5'-phosphate. R132 is a binding site for N(2)-acetyl-L-ornithine. 214-217 is a pyridoxal 5'-phosphate binding site; that stretch reads DEVQ. K243 carries the N6-(pyridoxal phosphate)lysine modification. S271 is a N(2)-acetyl-L-ornithine binding site. T272 is a binding site for pyridoxal 5'-phosphate.

It belongs to the class-III pyridoxal-phosphate-dependent aminotransferase family. ArgD subfamily. Homodimer. Pyridoxal 5'-phosphate serves as cofactor.

It is found in the cytoplasm. It catalyses the reaction N(2)-acetyl-L-ornithine + 2-oxoglutarate = N-acetyl-L-glutamate 5-semialdehyde + L-glutamate. The protein operates within amino-acid biosynthesis; L-arginine biosynthesis; N(2)-acetyl-L-ornithine from L-glutamate: step 4/4. The chain is Acetylornithine aminotransferase from Neisseria meningitidis serogroup A / serotype 4A (strain DSM 15465 / Z2491).